Here is a 525-residue protein sequence, read N- to C-terminus: Peptide chain release factor 3 (525 aa).

The region spanning 9–276 is the tr-type G domain; sequence AKRRTFAIIS…GFTRYAPAPQ (268 aa). GTP is bound by residues 18–25, 86–90, and 140–143; these read SHPDAGKT, DTPGH, and NKFD.

Belongs to the TRAFAC class translation factor GTPase superfamily. Classic translation factor GTPase family. PrfC subfamily.

The protein resides in the cytoplasm. Functionally, increases the formation of ribosomal termination complexes and stimulates activities of RF-1 and RF-2. It binds guanine nucleotides and has strong preference for UGA stop codons. It may interact directly with the ribosome. The stimulation of RF-1 and RF-2 is significantly reduced by GTP and GDP, but not by GMP. The polypeptide is Peptide chain release factor 3 (Francisella tularensis subsp. novicida (strain U112)).